Reading from the N-terminus, the 267-residue chain is Integral membrane protein 2C (267 aa).

Residue T37 is modified to Phosphothreonine. The helical; Signal-anchor for type II membrane protein transmembrane segment at 55–75 (VGGVCYLSMGMVVLLMGLVFA) threads the bilayer. One can recognise a BRICHOS domain in the interval 136–230 (FGGGDPADII…LCNGKDTYRL (95 aa)). The cysteines at positions 163 and 222 are disulfide-linked. N-linked (GlcNAc...) asparagine glycosylation is present at N169.

It belongs to the ITM2 family. As to quaternary structure, interacts with BACE1. Interacts with APP. Interacts with STMN2. In terms of processing, type I membrane-bound, as well as soluble, furin has a pre-eminent role in ITM2C proteolytic processing. PCSK7 and PCSK5 may also be involved although to a lesser extent. The soluble form of PCSK7 is incapable of processing ITM2C. Fails to undergo shedding by ADAM10 and intramembrane cleavage by SPPL2B. In terms of tissue distribution, high levels in the brain, specifically in the cerebral cortex, medulla, amygdala, hippocampus, thalamus, caudate nucleus, cerebellum, olfactory lobe and spinal cord. Very low levels in other organs.

Its subcellular location is the lysosome membrane. The protein resides in the cell membrane. Negative regulator of amyloid-beta peptide production. May inhibit the processing of APP by blocking its access to alpha- and beta-secretase. Binding to the beta-secretase-cleaved APP C-terminal fragment is negligible, suggesting that ITM2C is a poor gamma-secretase cleavage inhibitor. May play a role in TNF-induced cell death and neuronal differentiation. In Homo sapiens (Human), this protein is Integral membrane protein 2C (ITM2C).